Consider the following 255-residue polypeptide: Indole-3-glycerol phosphate synthase (255 aa).

The protein belongs to the TrpC family.

It catalyses the reaction 1-(2-carboxyphenylamino)-1-deoxy-D-ribulose 5-phosphate + H(+) = (1S,2R)-1-C-(indol-3-yl)glycerol 3-phosphate + CO2 + H2O. Its pathway is amino-acid biosynthesis; L-tryptophan biosynthesis; L-tryptophan from chorismate: step 4/5. This is Indole-3-glycerol phosphate synthase from Streptococcus pneumoniae (strain Hungary19A-6).